The following is a 429-amino-acid chain: Ribosomal RNA small subunit methyltransferase B (429 aa).

S-adenosyl-L-methionine-binding positions include 254–260 (CAAPGGK), Asp277, Asp303, and Asp322. Residue Cys375 is the Nucleophile of the active site. The interval 397–419 (ALSETGTPDQPGQQNLPGGEEGD) is disordered. The segment covering 400 to 412 (ETGTPDQPGQQNL) has biased composition (polar residues).

This sequence belongs to the class I-like SAM-binding methyltransferase superfamily. RsmB/NOP family.

The protein resides in the cytoplasm. The enzyme catalyses cytidine(967) in 16S rRNA + S-adenosyl-L-methionine = 5-methylcytidine(967) in 16S rRNA + S-adenosyl-L-homocysteine + H(+). Its function is as follows. Specifically methylates the cytosine at position 967 (m5C967) of 16S rRNA. The protein is Ribosomal RNA small subunit methyltransferase B of Salmonella typhi.